A 170-amino-acid polypeptide reads, in one-letter code: Ribosome maturation factor RimM (170 aa).

Positions Lys97–Phe170 constitute a PRC barrel domain.

Belongs to the RimM family. In terms of assembly, binds ribosomal protein uS19.

The protein resides in the cytoplasm. Functionally, an accessory protein needed during the final step in the assembly of 30S ribosomal subunit, possibly for assembly of the head region. Essential for efficient processing of 16S rRNA. May be needed both before and after RbfA during the maturation of 16S rRNA. It has affinity for free ribosomal 30S subunits but not for 70S ribosomes. This Stenotrophomonas maltophilia (strain K279a) protein is Ribosome maturation factor RimM.